The sequence spans 170 residues: Brassinosteroid-responsive RING protein 1 (170 aa).

The chain crosses the membrane as a helical span at residues 15–37 (LFVQTLSILGFIRTIVFSIFRFL). The RING-type; atypical zinc finger occupies 94-137 (CAVCLYEFEGEQEIRWLRNCRHIFHRSCLDRWMDHDQKTCPLCR).

Belongs to the RING-type zinc finger family. In terms of tissue distribution, highly expressed in stems, rosette leaves and siliques, and moderately expressed in roots, cauline leaves and flower. Detected at low levels in seeds.

It localises to the membrane. Functionally, may be involved in the brassinosteroids (BRs) signaling pathway and regulate the growth and development of rosette leaves. Seems to prevent over development of leaves and inflorescence stems. This Arabidopsis thaliana (Mouse-ear cress) protein is Brassinosteroid-responsive RING protein 1.